Here is a 330-residue protein sequence, read N- to C-terminus: Phosphate acyltransferase (330 aa).

This sequence belongs to the PlsX family. Homodimer. Probably interacts with PlsY.

The protein localises to the cytoplasm. It catalyses the reaction a fatty acyl-[ACP] + phosphate = an acyl phosphate + holo-[ACP]. Its pathway is lipid metabolism; phospholipid metabolism. In terms of biological role, catalyzes the reversible formation of acyl-phosphate (acyl-PO(4)) from acyl-[acyl-carrier-protein] (acyl-ACP). This enzyme utilizes acyl-ACP as fatty acyl donor, but not acyl-CoA. This chain is Phosphate acyltransferase, found in Streptococcus pneumoniae (strain ATCC 700669 / Spain 23F-1).